A 144-amino-acid chain; its full sequence is Phosphomevalonate dehydratase small subunit (144 aa).

The active-site Proton acceptor is the Ser-65.

It belongs to the AcnX type II small subunit family. Heterodimer composed of a large subunit (PMDh-L) and a small subunit (PMDh-S).

The enzyme catalyses (R)-5-phosphomevalonate = (2E)-3-methyl-5-phosphooxypent-2-enoate + H2O. It functions in the pathway isoprenoid biosynthesis; isopentenyl diphosphate biosynthesis via mevalonate pathway. Functionally, component of a hydro-lyase that catalyzes the dehydration of mevalonate 5-phosphate (MVA5P) to form trans-anhydromevalonate 5-phosphate (tAHMP). Involved in the archaeal mevalonate (MVA) pathway, which provides fundamental precursors for isoprenoid biosynthesis, such as isopentenyl diphosphate (IPP) and dimethylallyl diphosphate (DMAPP). The protein is Phosphomevalonate dehydratase small subunit of Methanosarcina acetivorans (strain ATCC 35395 / DSM 2834 / JCM 12185 / C2A).